We begin with the raw amino-acid sequence, 85 residues long: Conotoxin MaIr94 (85 aa).

An N-terminal signal peptide occupies residues Met1 to Ala22. Residues Gly23–Ala49 constitute a propeptide that is removed on maturation. 3 disulfide bridges follow: Cys52–Cys69, Cys59–Cys73, and Cys68–Cys84.

This sequence belongs to the conotoxin O1 superfamily. Expressed by the venom duct.

The protein resides in the secreted. Produces no obvious effect on ionic currents when tested on the mouse dorsal rooted ganglia (DRG). The polypeptide is Conotoxin MaIr94 (Conus marmoreus (Marble cone)).